Reading from the N-terminus, the 284-residue chain is Four and a half LIM domains protein 5 (284 aa).

The segment at 8–32 (CQYCTASLLGKKYVLKDDSPYCVTC) adopts a C4-type zinc-finger fold. LIM zinc-binding domains lie at 39-100 (NYCE…ECSS), 101-160 (KCFH…KEFA), 161-220 (HYCN…LYAN), and 223-283 (VACS…MDTD).

Interacts with CREM (via the third LIM domain). Interacts (via second LIM domain) with SPAG8. As to expression, testis-specific (at protein level).

Its subcellular location is the nucleus. In terms of biological role, may be involved in the regulation of spermatogenesis. Stimulates CREM transcriptional activity in a phosphorylation-independent manner. The sequence is that of Four and a half LIM domains protein 5 (FHL5) from Homo sapiens (Human).